An 847-amino-acid chain; its full sequence is Leucine--tRNA ligase (847 aa).

A 'HIGH' region motif is present at residues 39-49; it reads PYPSGALHMGH. A 'KMSKS' region motif is present at residues 613–617; it reads KMSKS. An ATP-binding site is contributed by K616.

This sequence belongs to the class-I aminoacyl-tRNA synthetase family.

It is found in the cytoplasm. It catalyses the reaction tRNA(Leu) + L-leucine + ATP = L-leucyl-tRNA(Leu) + AMP + diphosphate. In Gloeobacter violaceus (strain ATCC 29082 / PCC 7421), this protein is Leucine--tRNA ligase.